The chain runs to 247 residues: Oil body-associated protein 2A (247 aa).

A disordered region spans residues Met1–Lys26.

It belongs to the OBAP family.

This chain is Oil body-associated protein 2A, found in Arabidopsis thaliana (Mouse-ear cress).